The chain runs to 157 residues: S-ribosylhomocysteine lyase (157 aa).

Residues His-60, His-64, and Cys-127 each coordinate Fe cation.

It belongs to the LuxS family. As to quaternary structure, homodimer. Requires Fe cation as cofactor.

It carries out the reaction S-(5-deoxy-D-ribos-5-yl)-L-homocysteine = (S)-4,5-dihydroxypentane-2,3-dione + L-homocysteine. Involved in the synthesis of autoinducer 2 (AI-2) which is secreted by bacteria and is used to communicate both the cell density and the metabolic potential of the environment. The regulation of gene expression in response to changes in cell density is called quorum sensing. Catalyzes the transformation of S-ribosylhomocysteine (RHC) to homocysteine (HC) and 4,5-dihydroxy-2,3-pentadione (DPD). This chain is S-ribosylhomocysteine lyase, found in Helicobacter acinonychis (strain Sheeba).